The primary structure comprises 431 residues: Asparagine--tRNA ligase (431 aa).

Belongs to the class-II aminoacyl-tRNA synthetase family.

The protein resides in the cytoplasm. The enzyme catalyses tRNA(Asn) + L-asparagine + ATP = L-asparaginyl-tRNA(Asn) + AMP + diphosphate + H(+). This is Asparagine--tRNA ligase from Thermococcus kodakarensis (strain ATCC BAA-918 / JCM 12380 / KOD1) (Pyrococcus kodakaraensis (strain KOD1)).